Consider the following 549-residue polypeptide: Glucose-6-phosphate isomerase (549 aa).

Glu355 serves as the catalytic Proton donor. Catalysis depends on residues His386 and Lys514.

Belongs to the GPI family.

The protein localises to the cytoplasm. The enzyme catalyses alpha-D-glucose 6-phosphate = beta-D-fructose 6-phosphate. It functions in the pathway carbohydrate biosynthesis; gluconeogenesis. The protein operates within carbohydrate degradation; glycolysis; D-glyceraldehyde 3-phosphate and glycerone phosphate from D-glucose: step 2/4. Functionally, catalyzes the reversible isomerization of glucose-6-phosphate to fructose-6-phosphate. The sequence is that of Glucose-6-phosphate isomerase from Buchnera aphidicola subsp. Acyrthosiphon pisum (strain APS) (Acyrthosiphon pisum symbiotic bacterium).